The sequence spans 420 residues: Glucose-1-phosphate adenylyltransferase (420 aa).

Alpha-D-glucose 1-phosphate is bound by residues Tyr-107, Gly-172, Glu-187–Lys-188, and Ser-205.

The protein belongs to the bacterial/plant glucose-1-phosphate adenylyltransferase family. Homotetramer.

It catalyses the reaction alpha-D-glucose 1-phosphate + ATP + H(+) = ADP-alpha-D-glucose + diphosphate. The protein operates within glycan biosynthesis; glycogen biosynthesis. In terms of biological role, involved in the biosynthesis of ADP-glucose, a building block required for the elongation reactions to produce glycogen. Catalyzes the reaction between ATP and alpha-D-glucose 1-phosphate (G1P) to produce pyrophosphate and ADP-Glc. This Rhizobium leguminosarum bv. trifolii (strain WSM2304) protein is Glucose-1-phosphate adenylyltransferase.